The following is a 349-amino-acid chain: Ion-translocating oxidoreductase complex subunit D (349 aa).

The next 3 membrane-spanning stretches (helical) occupy residues 36–56, 77–99, and 124–144; these read CAFF…VALS, SAML…WMIV, and AMAA…SWIA. An FMN phosphoryl threonine modification is found at T185. 5 helical membrane-spanning segments follow: residues 212-232, 239-259, 265-285, 291-311, and 315-335; these read GTGV…LVLL, WHIS…GFLL, ASPL…FIAT, ATSP…VYVI, and GGYP…APFI.

Belongs to the NqrB/RnfD family. As to quaternary structure, the complex is composed of six subunits: RnfA, RnfB, RnfC, RnfD, RnfE and RnfG. The cofactor is FMN.

The protein resides in the cell inner membrane. Functionally, part of a membrane-bound complex that couples electron transfer with translocation of ions across the membrane. This Shewanella sp. (strain MR-4) protein is Ion-translocating oxidoreductase complex subunit D.